A 780-amino-acid polypeptide reads, in one-letter code: Protein AMEIOTIC 1 (780 aa).

Disordered regions lie at residues 32 to 60 (KKKT…SPLS) and 237 to 327 (APKE…RWSA). Over residues 50–60 (DSTIQPRSPLS) the composition is skewed to polar residues. Composition is skewed to basic and acidic residues over residues 263 to 291 (EVKR…EGKK) and 309 to 327 (RTVE…RWSA). Positions 448-547 (VEELTEEVNG…LEEQVTYLSS (100 aa)) form a coiled coil.

It is found in the nucleus. Its subcellular location is the chromosome. Functionally, plays a fundamental role in building the proper chromosome structure at the beginning of meiosis in male meiocytes. Required for the transition from leptotene to zygotene in meiocytes. Required for homologous chromosome pairing, and initiation and progression of meiotic recombination. Regulates meiocyte cytoskeleton organization. The polypeptide is Protein AMEIOTIC 1 (Zea mays (Maize)).